A 361-amino-acid chain; its full sequence is MTVPHIPRGPVMADIAAFRLTEEEKQRLLDPAVGGIILFRRNFQNIEQLKTLTAEIKALRTPELIIAVDHEGGRVQRFIEGFTRLPAMSTLGEIWDKDGASAAETAAGQVGRVLATELSACGIDLSFTPVLDLDWGNCPVIGNRSFHHNPEAVAHLALALQKGLAKGGMKSCGKHFPGHGFVEGDSHLVLPEDRRSLSELEAADLAPFHIMSREGMAAVMPAHVVYPQVDTKPAGFSEIWLKQILRRDIGFKGVIFSDDLTMEGACGVGGLKERARISFEAGCDIVLVCNRPDLVDELREDFRIPDNPALAQRWQYMANTLGSAAAQAVMQTADFQEAQAFVAGLASPQDTAGGVKVGEAF.

Substrate contacts are provided by residues Asp69, Arg77, Arg144, and 174 to 175 (KH). His187 functions as the Proton donor/acceptor in the catalytic mechanism. The Nucleophile role is filled by Asp258.

It belongs to the glycosyl hydrolase 3 family. NagZ subfamily.

The protein localises to the cytoplasm. It catalyses the reaction Hydrolysis of terminal non-reducing N-acetyl-D-hexosamine residues in N-acetyl-beta-D-hexosaminides.. The protein operates within cell wall biogenesis; peptidoglycan recycling. Its function is as follows. Plays a role in peptidoglycan recycling by cleaving the terminal beta-1,4-linked N-acetylglucosamine (GlcNAc) from peptide-linked peptidoglycan fragments, giving rise to free GlcNAc, anhydro-N-acetylmuramic acid and anhydro-N-acetylmuramic acid-linked peptides. The polypeptide is Beta-hexosaminidase (Neisseria meningitidis serogroup C / serotype 2a (strain ATCC 700532 / DSM 15464 / FAM18)).